Consider the following 210-residue polypeptide: Probable GTP-binding protein EngB (210 aa).

Residues 25–199 enclose the EngB-type G domain; that stretch reads TGIEVAFAGR…RQKLDSWFNE (175 aa). Residues 33–40, 60–64, 78–81, 145–148, and 178–180 contribute to the GTP site; these read GRSNAGKS, GRTQL, DLPG, TKAD, and FSS. Positions 40 and 62 each coordinate Mg(2+).

The protein belongs to the TRAFAC class TrmE-Era-EngA-EngB-Septin-like GTPase superfamily. EngB GTPase family. Mg(2+) serves as cofactor.

Its function is as follows. Necessary for normal cell division and for the maintenance of normal septation. The chain is Probable GTP-binding protein EngB from Klebsiella pneumoniae (strain 342).